The following is a 202-amino-acid chain: Large ribosomal subunit protein bL17 (202 aa).

The disordered stretch occupies residues 132-202; the sequence is DAAQKAASAG…TEVEKADDDK (71 aa). Residues 134–168 are compositionally biased toward low complexity; that stretch reads AQKAASAGAQEVTAAAAPQAAVEPEAVETEASAET. A compositionally biased stretch (acidic residues) spans 169 to 193; it reads AEAEVETAEVEAVDEASAEEADEAT.

This sequence belongs to the bacterial ribosomal protein bL17 family. As to quaternary structure, part of the 50S ribosomal subunit. Contacts protein L32.

The sequence is that of Large ribosomal subunit protein bL17 from Mycolicibacterium vanbaalenii (strain DSM 7251 / JCM 13017 / BCRC 16820 / KCTC 9966 / NRRL B-24157 / PYR-1) (Mycobacterium vanbaalenii).